The sequence spans 481 residues: Xylulose kinase (481 aa).

Substrate is bound at residue 81–82 (QH). Residue Asp-239 is the Proton acceptor of the active site.

It belongs to the FGGY kinase family.

It carries out the reaction D-xylulose + ATP = D-xylulose 5-phosphate + ADP + H(+). Catalyzes the phosphorylation of D-xylulose to D-xylulose 5-phosphate. The sequence is that of Xylulose kinase from Streptomyces rubiginosus.